A 237-amino-acid polypeptide reads, in one-letter code: Ribitol-5-phosphate cytidylyltransferase (237 aa).

CTP-binding positions include 7-10, 81-87, and serine 112; these read LAGG and GSDRNES.

This sequence belongs to the IspD/TarI cytidylyltransferase family. TarI subfamily.

It catalyses the reaction D-ribitol 5-phosphate + CTP + H(+) = CDP-L-ribitol + diphosphate. The protein operates within cell wall biogenesis; poly(ribitol phosphate) teichoic acid biosynthesis. Its function is as follows. Catalyzes the transfer of the cytidylyl group of CTP to D-ribitol 5-phosphate. The chain is Ribitol-5-phosphate cytidylyltransferase from Bacillus spizizenii (strain ATCC 23059 / NRRL B-14472 / W23) (Bacillus subtilis subsp. spizizenii).